The chain runs to 126 residues: Fluoride-specific ion channel FluC 2 (126 aa).

Helical transmembrane passes span 11–31 (IFLIGAGGFLGAICRFSLCEL), 43–63 (VLGSFMLGLIMYDTEYIGFIG), 69–89 (AFGTGFMGAFTTFSTFAVQSF), and 93–113 (FFPALENISVNLFLALVGVFM). The Na(+) site is built by glycine 76 and threonine 79.

This sequence belongs to the fluoride channel Fluc/FEX (TC 1.A.43) family.

The protein localises to the cell membrane. The catalysed reaction is fluoride(in) = fluoride(out). Na(+) is not transported, but it plays an essential structural role and its presence is essential for fluoride channel function. In terms of biological role, fluoride-specific ion channel. Important for reducing fluoride concentration in the cell, thus reducing its toxicity. This is Fluoride-specific ion channel FluC 2 from Methanosarcina barkeri (strain Fusaro / DSM 804).